A 380-amino-acid polypeptide reads, in one-letter code: Chaperone protein DnaJ (380 aa).

The J domain occupies 5-72; that stretch reads DFYEVLGVAK…NKRAAYDQYG (68 aa). A CR-type zinc finger spans residues 140 to 218; sequence GKDAQIRIPS…CGGQGKVKRQ (79 aa). Zn(2+)-binding residues include cysteine 153, cysteine 156, cysteine 170, cysteine 173, cysteine 192, cysteine 195, cysteine 206, and cysteine 209. CXXCXGXG motif repeat units lie at residues 153–160, 170–177, 192–199, and 206–213; these read CDTCHGSG, CTTCNGMG, CPHCRGTG, and CTSCGGQG. The tract at residues 359 to 380 is disordered; the sequence is KGGAKHSPSGESWTDRLKSFFS. Basic and acidic residues predominate over residues 371 to 380; the sequence is WTDRLKSFFS.

It belongs to the DnaJ family. In terms of assembly, homodimer. The cofactor is Zn(2+).

It localises to the cytoplasm. Its function is as follows. Participates actively in the response to hyperosmotic and heat shock by preventing the aggregation of stress-denatured proteins and by disaggregating proteins, also in an autonomous, DnaK-independent fashion. Unfolded proteins bind initially to DnaJ; upon interaction with the DnaJ-bound protein, DnaK hydrolyzes its bound ATP, resulting in the formation of a stable complex. GrpE releases ADP from DnaK; ATP binding to DnaK triggers the release of the substrate protein, thus completing the reaction cycle. Several rounds of ATP-dependent interactions between DnaJ, DnaK and GrpE are required for fully efficient folding. Also involved, together with DnaK and GrpE, in the DNA replication of plasmids through activation of initiation proteins. The chain is Chaperone protein DnaJ from Delftia acidovorans (strain DSM 14801 / SPH-1).